The primary structure comprises 232 residues: UPF0235 protein At5g63440 (232 aa).

This sequence belongs to the UPF0235 family. Interacts with CTN.

It localises to the nucleus speckle. May play a role during early embryonic development. Probably involved in pre-mRNA splicing. The chain is UPF0235 protein At5g63440 from Arabidopsis thaliana (Mouse-ear cress).